The following is a 752-amino-acid chain: Pentatricopeptide repeat-containing protein At5g13270, chloroplastic (752 aa).

The N-terminal 80 residues, 1–80 (MTILTVQSSF…LQEMDKAGVS (80 aa)), are a transit peptide targeting the chloroplast. 15 PPR repeats span residues 47–81 (QGQVENLHLVSLSKHRKLNEAFEFLQEMDKAGVSV), 82–116 (SSYSYQCLFEACRELRSLSHGRLLHDRMRMGIENP), 117–147 (SVLLQNCVLQMYCECRSLEDADKLFDEMSEL), 148–182 (NAVSRTTMISAYAEQGILDKAVGLFSGMLASGDKP), 183–217 (PSSMYTTLLKSLVNPRALDFGRQIHAHVIRAGLCS), 218–248 (NTSIETGIVNMYVKCGWLVGAKRVFDQMAVK), 249–283 (KPVACTGLMVGYTQAGRARDALKLFVDLVTEGVEW), 284–318 (DSFVFSVVLKACASLEELNLGKQIHACVAKLGLES), 319–349 (EVSVGTPLVDFYIKCSSFESACRAFQEIREP), 350–384 (NDVSWSAIISGYCQMSQFEEAVKTFKSLRSKNASI), 386–420 (NSFTYTSIFQACSVLADCNIGGQVHADAIKRSLIG), 421–451 (SQYGESALITMYSKCGCLDDANEVFESMDNP), 452–486 (DIVAWTAFISGHAYYGNASEALRLFEKMVSCGMKP), 487–522 (NSVTFIAVLTACSHAGLVEQGKHCLDTMLRKYNVAP), and 523–553 (TIDHYDCMIDIYARSGLLDEALKFMKNMPFE). The interval 558–633 (SWKCFLSGCW…ELSCSWIQEK (76 aa)) is type E motif. The type E(+) motif stretch occupies residues 634–664 (GKIHRFIVGDKHHPQTQEIYEKLKEFDGFME). Residues 665–752 (GDMFQCNMTE…EGKCSCNDYW (88 aa)) form a type DYW motif region.

This sequence belongs to the PPR family. PCMP-H subfamily.

Its subcellular location is the plastid. It localises to the chloroplast. This Arabidopsis thaliana (Mouse-ear cress) protein is Pentatricopeptide repeat-containing protein At5g13270, chloroplastic (PCMP-H90).